Here is a 531-residue protein sequence, read N- to C-terminus: Peptide chain release factor 3 (531 aa).

Residues 10-278 (RRRRTFAIIS…SLIDWAPAPK (269 aa)) enclose the tr-type G domain. Residues 19–26 (SHPDAGKT), 87–91 (DTPGH), and 141–144 (NKYD) contribute to the GTP site.

The protein belongs to the TRAFAC class translation factor GTPase superfamily. Classic translation factor GTPase family. PrfC subfamily.

Its subcellular location is the cytoplasm. Its function is as follows. Increases the formation of ribosomal termination complexes and stimulates activities of RF-1 and RF-2. It binds guanine nucleotides and has strong preference for UGA stop codons. It may interact directly with the ribosome. The stimulation of RF-1 and RF-2 is significantly reduced by GTP and GDP, but not by GMP. This Neisseria meningitidis serogroup B (strain ATCC BAA-335 / MC58) protein is Peptide chain release factor 3.